The following is a 393-amino-acid chain: UDP-galactose translocator (393 aa).

The next 10 membrane-spanning stretches (helical) occupy residues 3 to 23, 37 to 57, 65 to 85, 97 to 117, 140 to 160, 169 to 189, 200 to 220, 238 to 258, 269 to 289, and 315 to 335; these read AVGSGGSTATAGPGAVSAGAL, YISLAVLVVQNASLILSIRYA, FFATTAVVMAEVLKGLTCLLL, LVLFLHEAVLVQYMDTLKLAV, TFQVTYQLKILTTALFSVLML, WASLLLLFTGVAIVQAQQAGG, GVGLAAVVASCLSSGFAGVYF, LGLFGTALGLVGLWWAEGTAV, PAVWGVVLNQAFGGLLVAVVV, and LFGFHVDPLFALGAGLVIGAV. The interval 353 to 393 is disordered; the sequence is APTSGPCTHQQPPGQPPPPQLSSHHGDLSTEPFLPKSVLVK.

It belongs to the nucleotide-sugar transporter family. SLC35A subfamily. Interacts with SLC35A3; the interaction is reduced in the presence of SLC35A4. Found in a complex with SLC35A3 and SLC35A4.

The protein localises to the golgi apparatus membrane. It catalyses the reaction UMP(out) + UDP-alpha-D-galactose(in) = UMP(in) + UDP-alpha-D-galactose(out). It carries out the reaction UDP-N-acetyl-alpha-D-galactosamine(in) + UMP(out) = UDP-N-acetyl-alpha-D-galactosamine(out) + UMP(in). The catalysed reaction is UMP(out) + UDP-alpha-D-glucose(in) = UMP(in) + UDP-alpha-D-glucose(out). The enzyme catalyses UMP(out) + UDP-N-acetyl-alpha-D-glucosamine(in) = UMP(in) + UDP-N-acetyl-alpha-D-glucosamine(out). It catalyses the reaction UDP-alpha-D-galactose(in) + AMP(out) = UDP-alpha-D-galactose(out) + AMP(in). It carries out the reaction UDP-alpha-D-galactose(in) + CMP(out) = UDP-alpha-D-galactose(out) + CMP(in). The catalysed reaction is UDP-N-acetyl-alpha-D-galactosamine(out) + UDP-alpha-D-galactose(in) = UDP-N-acetyl-alpha-D-galactosamine(in) + UDP-alpha-D-galactose(out). The enzyme catalyses UDP-N-acetyl-alpha-D-glucosamine(out) + UDP-alpha-D-galactose(in) = UDP-N-acetyl-alpha-D-glucosamine(in) + UDP-alpha-D-galactose(out). It catalyses the reaction UDP-alpha-D-galactose(in) + UDP-alpha-D-glucose(out) = UDP-alpha-D-galactose(out) + UDP-alpha-D-glucose(in). It carries out the reaction UMP(out) + CMP(in) = UMP(in) + CMP(out). The catalysed reaction is UMP(out) + AMP(in) = UMP(in) + AMP(out). In terms of biological role, transports uridine diphosphate galactose (UDP-galactose) from the cytosol into the Golgi apparatus, functioning as an antiporter that exchanges UDP-galactose for UMP. It is also able to exchange UDP-galactose for AMP and CMP, and to transport UDP-N-acetylgalactosamine (UDP-GalNAc) and other nucleotide sugars. As a provider of UDP-galactose to galactosyltransferases present in the Golgi apparatus, it is necessary for globotriaosylceramide/globoside (Gb3Cer) synthesis from lactosylceramide. The chain is UDP-galactose translocator from Bos taurus (Bovine).